We begin with the raw amino-acid sequence, 421 residues long: ATP-dependent RNA helicase RhlB (421 aa).

The Q motif signature appears at 9–37; that stretch reads QKFSDFSLHPKVVEALEKKGFHNCTPIQA. In terms of domain architecture, Helicase ATP-binding spans 40–219; sequence LPLTLAGRDV…FEQMNNAEYI (180 aa). 53–60 is an ATP binding site; sequence AQTGTGKT. The short motif at 165–168 is the DEAD box element; the sequence is DEAD. Residues 245–390 form the Helicase C-terminal domain; the sequence is RLLQTLIEEE…VSKYNPDALM (146 aa). The interval 392 to 421 is disordered; it reads DLPKPLRLTRPRTGNGPRRTGAPRNRRRSG. The segment covering 402 to 414 has biased composition (low complexity); the sequence is PRTGNGPRRTGAP.

Belongs to the DEAD box helicase family. RhlB subfamily. In terms of assembly, component of the RNA degradosome, which is a multiprotein complex involved in RNA processing and mRNA degradation.

It is found in the cytoplasm. It catalyses the reaction ATP + H2O = ADP + phosphate + H(+). Its function is as follows. DEAD-box RNA helicase involved in RNA degradation. Has RNA-dependent ATPase activity and unwinds double-stranded RNA. In Shigella dysenteriae serotype 1 (strain Sd197), this protein is ATP-dependent RNA helicase RhlB.